A 191-amino-acid polypeptide reads, in one-letter code: Peptidyl-tRNA hydrolase (191 aa).

Tyrosine 16 is a binding site for tRNA. Histidine 21 serves as the catalytic Proton acceptor. The tRNA site is built by phenylalanine 66, asparagine 68, and asparagine 114.

Belongs to the PTH family. Monomer.

It localises to the cytoplasm. The catalysed reaction is an N-acyl-L-alpha-aminoacyl-tRNA + H2O = an N-acyl-L-amino acid + a tRNA + H(+). Hydrolyzes ribosome-free peptidyl-tRNAs (with 1 or more amino acids incorporated), which drop off the ribosome during protein synthesis, or as a result of ribosome stalling. Its function is as follows. Catalyzes the release of premature peptidyl moieties from peptidyl-tRNA molecules trapped in stalled 50S ribosomal subunits, and thus maintains levels of free tRNAs and 50S ribosomes. This chain is Peptidyl-tRNA hydrolase, found in Geotalea daltonii (strain DSM 22248 / JCM 15807 / FRC-32) (Geobacter daltonii).